Reading from the N-terminus, the 423-residue chain is Glycine-rich protein 1 (423 aa).

An N-terminal signal peptide occupies residues 1 to 20; it reads MKKICLTFVFLLSLFPIYSS. Disordered regions lie at residues 28-47, 78-133, 159-219, and 236-288; these read TIES…AGPA, DDDN…SKKN, KGGS…GAGA, and GASA…ASAG. Residues 31–42 show a composition bias toward low complexity; sequence SGSSKSSGSSVG. Composition is skewed to basic and acidic residues over residues 81–93 and 102–111; these read NKDK…DGKT and QNGDDVKSDN. Residues 159–172 show a composition bias toward gly residues; that stretch reads KGGSANNGGEGGAT. Over residues 173-183 the composition is skewed to low complexity; the sequence is SAGSAGATSGA. 2 stretches are compositionally biased toward gly residues: residues 205–219 and 236–247; these read GAGG…GAGA and GASAGAGAGGAQ. Residues 248 to 284 are compositionally biased toward low complexity; it reads GDAEAASAGSTAGSTSSGGAAASGASSGAGSSDSGQG.

In terms of tissue distribution, nacreous layer of shell (at protein level).

The protein resides in the secreted. The chain is Glycine-rich protein 1 from Pinctada maxima (Silver-lipped pearl oyster).